The chain runs to 334 residues: tRNA dimethylallyltransferase (334 aa).

Residue 22-29 participates in ATP binding; that stretch reads GPTASGKT. 24–29 provides a ligand contact to substrate; it reads TASGKT.

The protein belongs to the IPP transferase family. Monomer. The cofactor is Mg(2+).

It carries out the reaction adenosine(37) in tRNA + dimethylallyl diphosphate = N(6)-dimethylallyladenosine(37) in tRNA + diphosphate. In terms of biological role, catalyzes the transfer of a dimethylallyl group onto the adenine at position 37 in tRNAs that read codons beginning with uridine, leading to the formation of N6-(dimethylallyl)adenosine (i(6)A). The chain is tRNA dimethylallyltransferase from Rhodopirellula baltica (strain DSM 10527 / NCIMB 13988 / SH1).